The following is a 27-amino-acid chain: Cupiennin-4b (27 aa).

Position 27 is a glutamine amide (Q27).

As to expression, expressed by the venom gland.

The protein resides in the secreted. The sequence is that of Cupiennin-4b from Cupiennius salei (American wandering spider).